The following is a 248-amino-acid chain: Probable transcriptional regulatory protein RPB_4273 (248 aa).

A disordered region spans residues 1-22 (MAGHSQFKNIMHRKGKQDAQRS).

The protein belongs to the TACO1 family.

Its subcellular location is the cytoplasm. The chain is Probable transcriptional regulatory protein RPB_4273 from Rhodopseudomonas palustris (strain HaA2).